Consider the following 316-residue polypeptide: D-alanine--D-alanine ligase (316 aa).

Positions 108 to 310 (ERYEELSVVK…FDELVDLIIK (203 aa)) constitute an ATP-grasp domain. Residue 138-193 (EEKIGLPCVVKPRKEGSSIGTHICFSKEELLDALKNEFKNYDEMIVQEYIKGKEIT) participates in ATP binding. Residues Asp-265, Glu-277, and Asn-279 each coordinate Mg(2+).

It belongs to the D-alanine--D-alanine ligase family. Mg(2+) serves as cofactor. Mn(2+) is required as a cofactor.

Its subcellular location is the cytoplasm. The enzyme catalyses 2 D-alanine + ATP = D-alanyl-D-alanine + ADP + phosphate + H(+). It participates in cell wall biogenesis; peptidoglycan biosynthesis. Its function is as follows. Cell wall formation. This is D-alanine--D-alanine ligase from Fervidobacterium nodosum (strain ATCC 35602 / DSM 5306 / Rt17-B1).